We begin with the raw amino-acid sequence, 177 residues long: Large ribosomal subunit protein uL16m (177 aa).

It belongs to the universal ribosomal protein uL16 family.

The protein resides in the mitochondrion. The sequence is that of Large ribosomal subunit protein uL16m (RPL16) from Brassica napus (Rape).